The following is a 602-amino-acid chain: MAAAPSATAPKHNYTLGTNASQLELYKYLKTVPPIPELRQAVTIKKYEEASVDDTLYPLIDEHQIIMVVGAFFGDEGKGKTVDAVARHPACTCVARVNSGENAGHTVFDDIGRKYVFNLAPSSLLTPNTRNYVSSECVMDPISFMEREIGQFIKSNMPYKDKLFVGNVFVVTPYHKLLDLLGSAPNSSTLKGMSPIHASKVTKRGIRLDHIFNDEGVLRARLAKDMDTYYGLLKVKGLTDKDVVRRCQEENADGVERVPGYVVDFARAENKIDYLVKLYTERVKNNKDFPRRCDVTHELRAALARGEKLLLEGPQSYWLSNAREKFWESTTSADTTAGGLLASAQFNFQRYKVLVINVHKAPGSSRVGIGANPSSFVPQDYYSAQDIKTLEALPKGGCVDFDKIQNFFYTKAFNTESKTFNGIYEPLEYEDATGKYNIGVAMSIASARHHGECGAVTKKPRVCGFFDCVLHFEVNAVQGPYLSISAVDRGDDYDRIGITIAYVYYDVGNKMVDANGRVYKNGDIIKAGDPVPCEMALYHCYPIVKVINGWKGAPIAASKRRPNEPLPKGVCEFIANVEFFTGAKVISIGNGPRGSDIIYLKQ.

Residues 74–80 (GDEGKGK) and 104–106 (GHT) contribute to the GTP site. The Proton acceptor role is filled by D75. Residues D75 and G104 each contribute to the Mg(2+) site. Residues 75–78 (DEGK), 102–105 (NAGH), T189, K203, Q315, T331, and K459 each bind IMP. H105 functions as the Proton donor in the catalytic mechanism. Substrate is bound at residue 455 to 461 (AVTKKPR). GTP contacts are provided by residues R461 and 589–591 (GNG).

It belongs to the adenylosuccinate synthetase family. In terms of assembly, homodimer. Mg(2+) is required as a cofactor.

The protein resides in the cytoplasm. The enzyme catalyses IMP + L-aspartate + GTP = N(6)-(1,2-dicarboxyethyl)-AMP + GDP + phosphate + 2 H(+). Its pathway is purine metabolism; AMP biosynthesis via de novo pathway; AMP from IMP: step 1/2. Its function is as follows. Plays an important role in the salvage pathway for purine nucleotide biosynthesis. Catalyzes the first committed step in the biosynthesis of AMP from IMP. The chain is Adenylosuccinate synthetase from Trypanosoma brucei brucei (strain 927/4 GUTat10.1).